A 254-amino-acid polypeptide reads, in one-letter code: Putative electron transfer flavoprotein subunit YdiQ (254 aa).

It belongs to the ETF beta-subunit/FixA family. As to quaternary structure, ydiR and YdiQ form a heterodimer.

Functionally, may play a role in a redox process. The chain is Putative electron transfer flavoprotein subunit YdiQ (ydiQ) from Escherichia coli (strain K12).